The sequence spans 940 residues: Isoleucine--tRNA ligase (940 aa).

The 'HIGH' region signature appears at 58–68 (PYANGSIHIGH). Glu564 serves as a coordination point for L-isoleucyl-5'-AMP. A 'KMSKS' region motif is present at residues 605-609 (KMSKS). An ATP-binding site is contributed by Lys608. Zn(2+)-binding residues include Cys903, Cys906, Cys923, and Cys926.

It belongs to the class-I aminoacyl-tRNA synthetase family. IleS type 1 subfamily. As to quaternary structure, monomer. It depends on Zn(2+) as a cofactor.

It localises to the cytoplasm. It catalyses the reaction tRNA(Ile) + L-isoleucine + ATP = L-isoleucyl-tRNA(Ile) + AMP + diphosphate. Functionally, catalyzes the attachment of isoleucine to tRNA(Ile). As IleRS can inadvertently accommodate and process structurally similar amino acids such as valine, to avoid such errors it has two additional distinct tRNA(Ile)-dependent editing activities. One activity is designated as 'pretransfer' editing and involves the hydrolysis of activated Val-AMP. The other activity is designated 'posttransfer' editing and involves deacylation of mischarged Val-tRNA(Ile). The polypeptide is Isoleucine--tRNA ligase (Shewanella baltica (strain OS223)).